The chain runs to 49 residues: uncharacterized protein (49 aa).

The chain crosses the membrane as a helical span at residues 5 to 27 (ILEILSAFIRILFKLLYCWALFF).

Its subcellular location is the membrane. This is an uncharacterized protein from Saccharomyces cerevisiae (strain ATCC 204508 / S288c) (Baker's yeast).